Consider the following 609-residue polypeptide: Actin-interacting protein 1-2 (609 aa).

WD repeat units follow at residues 2 to 42 (ELSE…VTLD), 54 to 93 (EHAY…VLKN), 97 to 141 (VLAG…GEFD), 142 to 182 (GHSR…FKLS), 185 to 224 (EHSN…ILGE), 230 to 269 (GHKG…SGSL), 277 to 318 (GSSG…KSPF), 322 to 362 (GHMK…CGKL), 445 to 484 (NLGF…LTEE), 489 to 528 (RHRG…MKLK), 532 to 571 (YHSA…SSRM), and 576 to 609 (AHLG…FTPQ).

In terms of tissue distribution, expressed in leaves, stems, flower buds and flowers.

Functionally, binds actin. Enhances the F-actin depolymerization activity of actin-depolymerizing factor (ADF) proteins. This Arabidopsis thaliana (Mouse-ear cress) protein is Actin-interacting protein 1-2.